A 341-amino-acid polypeptide reads, in one-letter code: Mitochondrial transcription factor 1 (341 aa).

S-adenosyl-L-methionine contacts are provided by leucine 23, glutamate 77, aspartate 101, and asparagine 137.

The protein belongs to the class I-like SAM-binding methyltransferase superfamily. rRNA adenine N(6)-methyltransferase family.

The protein localises to the mitochondrion intermembrane space. In terms of biological role, mitochondrial transcription factor that confers selective promoter recognition on the core subunit of the yeast mitochondrial RNA polymerase. Interacts with DNA in a non-specific manner. The sequence is that of Mitochondrial transcription factor 1 (MTF1) from Saccharomyces cerevisiae (strain ATCC 204508 / S288c) (Baker's yeast).